The sequence spans 350 residues: MERILEKVRAKSEIPVYDKSIENVLSAILTTNDFWKIVDLSEEPLPLVADIIRILEEEGLVKISNGIEFTEKGNEFIKSYGIGAKDNSVCECCEGRGVSLKNYQDLLERFKEIVKNRPMPKHEYDQGFVTPECTISRIALMNSRGDLFNKDVLVLGDDDLTSIALMLSNLPKKIVVVDIDDRLINFIKEVAEQLNYKNIEVITLDLRKPLPEKYSRAFDTFITDPPETVYAVKTFIGRGISALKGERRAGYFGITRRESSLDKWREIQRTLINDFNVVITDIIRNFNHYVNWGYEEETRAWKLAPVKKKPEDIWYKSYMFRIETLKDSRGFEEEVDVGDELYNDAESSTT.

The protein belongs to the branched-chain polyamine synthase family.

It localises to the cytoplasm. It carries out the reaction 2 S-adenosyl 3-(methylsulfanyl)propylamine + spermidine = N(4)-bis(aminopropyl)spermidine + 2 S-methyl-5'-thioadenosine + 2 H(+). Its pathway is amine and polyamine biosynthesis. Its function is as follows. Involved in the biosynthesis of branched-chain polyamines, which support the growth of thermophiles under high-temperature conditions. Catalyzes the sequential condensation of spermidine with the aminopropyl groups of decarboxylated S-adenosylmethionines to produce N(4)-bis(aminopropyl)spermidine via N(4)-aminopropylspermidine. This Methanocaldococcus jannaschii (strain ATCC 43067 / DSM 2661 / JAL-1 / JCM 10045 / NBRC 100440) (Methanococcus jannaschii) protein is N(4)-bis(aminopropyl)spermidine synthase.